Reading from the N-terminus, the 505-residue chain is Flagellin (505 aa).

Belongs to the bacterial flagellin family.

The protein resides in the secreted. Its subcellular location is the bacterial flagellum. Functionally, flagellin is the subunit protein which polymerizes to form the filaments of bacterial flagella. In Salmonella dublin, this protein is Flagellin (fliC).